Consider the following 294-residue polypeptide: Non-selective voltage-gated ion channel VDAC2 (294 aa).

Alanine 2 carries the N-acetylalanine modification. The ATP site is built by lysine 23 and lysine 31. Lysine 31 is modified (N6-acetyllysine; alternate). At lysine 31 the chain carries N6-succinyllysine; alternate. Lysine 31 is covalently cross-linked (Glycyl lysine isopeptide (Lys-Gly) (interchain with G-Cter in ubiquitin); alternate). A run of 2 beta stranded transmembrane segments spans residues 37-46 (LVKLDVKTKS) and 50-58 (VEFSTSGSS). Residues lysine 64 and lysine 72 each participate in a glycyl lysine isopeptide (Lys-Gly) (interchain with G-Cter in ubiquitin) cross-link. A beta stranded membrane pass occupies residues 65 to 75 (VTGTLETKYKW). Position 78 is a phosphotyrosine (tyrosine 78). Beta stranded transmembrane passes span 80–87 (LTFTEKWN), 91–100 (TLGTEIAIED), and 106–115 (LKLTFDTTFS). At threonine 118 the chain carries Phosphothreonine. Lysine 120 is modified (N6-acetyllysine; alternate). A Glycyl lysine isopeptide (Lys-Gly) (interchain with G-Cter in ubiquitin); alternate cross-link involves residue lysine 120. Residues lysine 121 and lysine 124 each participate in a glycyl lysine isopeptide (Lys-Gly) (interchain with G-Cter in ubiquitin) cross-link. The next 4 beta stranded transmembrane spans lie at 122–131 (SGKIKSSYKR), 134–141 (INLGCDVD), 148–156 (AIHGSAVFG), and 161–169 (LAGYQMTFD). Lysine 172 participates in a covalent cross-link: Glycyl lysine isopeptide (Lys-Gly) (interchain with G-Cter in ubiquitin). The next 6 beta stranded transmembrane spans lie at 174-186 (KLTR…GYRT), 189-196 (FQLHTNVN), 200-209 (EFGGSIYQKV), 213-222 (LDTSVNLAWT), 229-238 (RFGIAAKYQL), and 242-249 (ASISAKVN). A Phosphoserine modification is found at serine 251. NAD(+) contacts are provided by residues 253–255 (LIG) and 271–275 (SALVD). A run of 2 beta stranded transmembrane segments spans residues 253–262 (LIGVGYTQTL) and 265–274 (GVKLTLSALV). Residue lysine 277 is modified to N6-acetyllysine; alternate. A Glycyl lysine isopeptide (Lys-Gly) (interchain with G-Cter in ubiquitin); alternate cross-link involves residue lysine 277. The beta stranded transmembrane segment at 284–293 (HKVGLALELE) threads the bilayer. A Glycyl lysine isopeptide (Lys-Gly) (interchain with G-Cter in ubiquitin) cross-link involves residue lysine 285.

It belongs to the eukaryotic mitochondrial porin family. Monomer, homodimer and higher order oligomers; formation of higher order structures is necessary for scramblase activity. Interacts with ARMC12 in a TBC1D21-dependent manner. Interacts with KLC3. Interacts with SPATA33. Interacts with PPP3CC in a SPATA33-dependent manner. In terms of processing, ubiquitinated by PRKN during mitophagy, leading to its degradation and enhancement of mitophagy. Deubiquitinated by USP30. Expressed in erythrocytes (at protein level). Expressed in all tissues examined.

Its subcellular location is the mitochondrion outer membrane. The protein resides in the membrane. The catalysed reaction is chloride(in) = chloride(out). The enzyme catalyses K(+)(in) = K(+)(out). It carries out the reaction a 1,2-diacyl-sn-glycero-3-phospho-L-serine(in) = a 1,2-diacyl-sn-glycero-3-phospho-L-serine(out). It catalyses the reaction a 1,2-diacyl-sn-glycero-3-phosphocholine(in) = a 1,2-diacyl-sn-glycero-3-phosphocholine(out). The catalysed reaction is a 1,2-diacyl-sn-glycero-3-phospho-(1D-myo-inositol)(in) = a 1,2-diacyl-sn-glycero-3-phospho-(1D-myo-inositol)(out). Its function is as follows. Non-selective voltage-gated ion channel that mediates the transport of anions and cations through the mitochondrion outer membrane and plasma membrane. The channel adopts an open conformation at zero mV and a closed conformation at both positive and negative potentials. There are two populations of channels; the main that functions in a lower open-state conductance with lower ion selectivity, that switch, in a voltage-dependent manner, from the open to a low-conducting 'closed' state and the other that has a normal ion selectivity in the typical high conductance, 'open' state. Binds various lipids, including the sphingolipid ceramide, the phospholipid phosphatidylcholine, and the sterols cholesterol and oxysterol. Binding of ceramide promotes the mitochondrial outer membrane permeabilization (MOMP) apoptotic pathway. Catalyzes the scrambling of phospholipids across the outer mitochondrial membrane; the mechanism is unrelated to channel activity and is capable of translocating both anionic and zwitterionic phospholipids. This is Non-selective voltage-gated ion channel VDAC2 from Homo sapiens (Human).